Reading from the N-terminus, the 647-residue chain is Denticleless protein homolog (647 aa).

WD repeat units lie at residues 48–88 (AAAV…KQSS), 95–134 (AHDNAVFDIAWVPGTNCLVTASGDQTARLWDVITGDLLGT), 137–177 (GHQC…KDGF), 209–248 (DSQQGVTVVLFCDETKLISSGAVDGIIKMWDLRRNYTAYH), 264–303 (TRKLGYSGLSLDYTGSRLFSNCTDDNIYMFNISGLKTTPV), 308–349 (GHSN…QAPM), and 353–393 (GHSQ…EGEN). 2 short sequence motifs (DDB1-binding motif) span residues 167-170 (WDTR) and 238-241 (WDLR). 2 disordered regions span residues 410 to 487 (QSPN…SKSP) and 534 to 647 (KRSR…RTQD). Polar residues-rich tracts occupy residues 426-443 (PSKNPGSVRSVSLASPQP) and 471-486 (KMPSSLQQWISRSSKS). A compositionally biased stretch (basic and acidic residues) spans 543 to 558 (LKKEDSFGLESEKRLG). The segment covering 586–600 (KGSAQPKSPSSGSSQ) has biased composition (low complexity).

Belongs to the WD repeat cdt2 family. Component of the DCX(DTL) E3 ubiquitin ligase complex, at least composed of cul4 (cul4a or cul4b), ddb1, dtl/cdt2 and rbx1.

It localises to the nucleus. The protein localises to the cytoplasm. Its subcellular location is the cytoskeleton. It is found in the microtubule organizing center. The protein resides in the centrosome. It localises to the chromosome. The protein operates within protein modification; protein ubiquitination. Substrate-specific adapter of a DCX (DDB1-CUL4-X-box) E3 ubiquitin-protein ligase complex required for cell cycle control, DNA damage response and translesion DNA synthesis. The DCX(DTL) complex, also named CRL4(CDT2) complex, mediates the polyubiquitination and subsequent degradation of CDT1, CDKN1A/p21(CIP1), KMT5A and SDE2. CDT1 degradation in response to DNA damage is necessary to ensure proper cell cycle regulation of DNA replication. CDKN1A/p21(CIP1) degradation during S phase or following UV irradiation is essential to control replication licensing. KMT5A degradation is also important for a proper regulation of mechanisms such as TGF-beta signaling, cell cycle progression, DNA repair and cell migration. Most substrates require their interaction with PCNA for their polyubiquitination: substrates interact with PCNA via their PIP-box, and those containing the 'K+4' motif in the PIP box, recruit the DCX(DTL) complex, leading to their degradation. In undamaged proliferating cells, the DCX(DTL) complex also promotes the 'Lys-164' monoubiquitination of PCNA, thereby being involved in PCNA-dependent translesion DNA synthesis. May play a role in the regulation of the circadian clock. This is Denticleless protein homolog (dtl) from Danio rerio (Zebrafish).